The primary structure comprises 113 residues: MAKYRKLGRETAHRNLMLRNLVTCLLRSGRIETTVTRAKETRRMAEKMITLAKRGDLHARRQVLAYVMDETVVNNLFTDLAPKYAERNGGYTRIIKIGPRKGDAAEMAFIELV.

Belongs to the bacterial ribosomal protein bL17 family. Part of the 50S ribosomal subunit. Contacts protein L32.

The polypeptide is Large ribosomal subunit protein bL17 (Clostridioides difficile (strain 630) (Peptoclostridium difficile)).